Consider the following 627-residue polypeptide: Putative ankyrin repeat protein L122 (627 aa).

12 ANK repeats span residues 61 to 94 (KGWTALMIACAMCDKWSSFKTIRLLLKKGADVHI), 98 to 130 (KGRTVLSLMVNIITENKFNIMDLLIDKGADINS), 153 to 186 (HACYVLGKSVDPNLEKNDSKTVRYLLDKGADPNI), 190 to 223 (YGKTVLFYAARMKNQDKAYEISKTLIERGGNANH), 228 to 259 (AETVLIYLCISCSHYSCELIQLLLDNGVDINH), 263 to 296 (IGFTALMCACINIKNPSNFETIKFMLDKGANINL), 300 to 333 (DGFTAFMNIFGNNYFDYIVPVIQIMLDYGADIND), 337 to 370 (NNVTVLMMAVKFAKNDKNMTVINFLLDKGADLEI), 374 to 407 (YDWTALFYACRYSNSSGNNDAVKLLLDYGANVNV), 411 to 444 (LGHTPLIIACQYADNESNIDTVKLLLEYGANPNL), 448 to 480 (DKNTALSVAITWLSKNRYEVVKLLLYYHADSNT), and 491 to 523 (REYNLLVWIVKNIKCNKLDLLMLLIEHGANYSD).

The polypeptide is Putative ankyrin repeat protein L122 (Acanthamoeba polyphaga (Amoeba)).